The primary structure comprises 148 residues: D-aminoacyl-tRNA deacylase (148 aa).

Positions 137-138 (GP) match the Gly-cisPro motif, important for rejection of L-amino acids motif.

Belongs to the DTD family. As to quaternary structure, homodimer.

It localises to the cytoplasm. It carries out the reaction glycyl-tRNA(Ala) + H2O = tRNA(Ala) + glycine + H(+). It catalyses the reaction a D-aminoacyl-tRNA + H2O = a tRNA + a D-alpha-amino acid + H(+). In terms of biological role, an aminoacyl-tRNA editing enzyme that deacylates mischarged D-aminoacyl-tRNAs. Also deacylates mischarged glycyl-tRNA(Ala), protecting cells against glycine mischarging by AlaRS. Acts via tRNA-based rather than protein-based catalysis; rejects L-amino acids rather than detecting D-amino acids in the active site. By recycling D-aminoacyl-tRNA to D-amino acids and free tRNA molecules, this enzyme counteracts the toxicity associated with the formation of D-aminoacyl-tRNA entities in vivo and helps enforce protein L-homochirality. The chain is D-aminoacyl-tRNA deacylase from Lactiplantibacillus plantarum (strain ATCC BAA-793 / NCIMB 8826 / WCFS1) (Lactobacillus plantarum).